A 299-amino-acid chain; its full sequence is GTPase Era (299 aa).

The 171-residue stretch at 5-175 (RSGFVCFVGR…TDVLAGKLPP (171 aa)) folds into the Era-type G domain. Positions 13 to 20 (GRPNTGKS) are G1. Residue 13–20 (GRPNTGKS) participates in GTP binding. The segment at 39-43 (QTTRH) is G2. A G3 region spans residues 60-63 (DTPG). GTP is bound by residues 60-64 (DTPGL) and 124-127 (TKID). The G4 stretch occupies residues 124–127 (TKID). Residues 154–156 (VSA) form a G5 region. In terms of domain architecture, KH type-2 spans 206 to 285 (VRDELPHSLA…YLDLRVKIAK (80 aa)).

This sequence belongs to the TRAFAC class TrmE-Era-EngA-EngB-Septin-like GTPase superfamily. Era GTPase family. In terms of assembly, monomer.

It is found in the cell envelope. It localises to the secreted. The protein resides in the cell wall. Exhibits GTPase activity. Binds RNA but is probably not involved in ribosome assembly in mycobacteria. The chain is GTPase Era from Mycobacterium sp. (strain KMS).